Here is a 341-residue protein sequence, read N- to C-terminus: DNA-directed RNA polymerase subunit alpha (341 aa).

The segment at 1–237 is alpha N-terminal domain (alpha-NTD); that stretch reads MLSLSKNWNA…EQLQLFISFE (237 aa). Residues 247 to 341 are alpha C-terminal domain (alpha-CTD); sequence TDALPFSPYL…LSKRYEDSYN (95 aa).

Belongs to the RNA polymerase alpha chain family. As to quaternary structure, homodimer. The RNAP catalytic core consists of 2 alpha, 1 beta, 1 beta' and 1 omega subunit. When a sigma factor is associated with the core the holoenzyme is formed, which can initiate transcription.

The catalysed reaction is RNA(n) + a ribonucleoside 5'-triphosphate = RNA(n+1) + diphosphate. Its function is as follows. DNA-dependent RNA polymerase catalyzes the transcription of DNA into RNA using the four ribonucleoside triphosphates as substrates. The polypeptide is DNA-directed RNA polymerase subunit alpha (Rickettsia bellii (strain RML369-C)).